The following is a 317-amino-acid chain: Acetyl-coenzyme A carboxylase carboxyl transferase subunit alpha (317 aa).

The region spanning 38-292 is the CoA carboxyltransferase C-terminal domain; that stretch reads TLEERLARLE…DNIIKQSLVE (255 aa).

This sequence belongs to the AccA family. In terms of assembly, acetyl-CoA carboxylase is a heterohexamer composed of biotin carboxyl carrier protein (AccB), biotin carboxylase (AccC) and two subunits each of ACCase subunit alpha (AccA) and ACCase subunit beta (AccD).

Its subcellular location is the cytoplasm. The enzyme catalyses N(6)-carboxybiotinyl-L-lysyl-[protein] + acetyl-CoA = N(6)-biotinyl-L-lysyl-[protein] + malonyl-CoA. The protein operates within lipid metabolism; malonyl-CoA biosynthesis; malonyl-CoA from acetyl-CoA: step 1/1. In terms of biological role, component of the acetyl coenzyme A carboxylase (ACC) complex. First, biotin carboxylase catalyzes the carboxylation of biotin on its carrier protein (BCCP) and then the CO(2) group is transferred by the carboxyltransferase to acetyl-CoA to form malonyl-CoA. The protein is Acetyl-coenzyme A carboxylase carboxyl transferase subunit alpha of Oceanobacillus iheyensis (strain DSM 14371 / CIP 107618 / JCM 11309 / KCTC 3954 / HTE831).